The following is a 283-amino-acid chain: Pantothenate synthetase (283 aa).

30–37 (MGNLHAGH) lines the ATP pocket. His-37 acts as the Proton donor in catalysis. Residue Gln-61 coordinates (R)-pantoate. Gln-61 is a binding site for beta-alanine. 149-152 (GEKD) provides a ligand contact to ATP. Gln-155 serves as a coordination point for (R)-pantoate. Residues Val-178 and 186–189 (LSSR) each bind ATP.

This sequence belongs to the pantothenate synthetase family. In terms of assembly, homodimer.

It is found in the cytoplasm. It catalyses the reaction (R)-pantoate + beta-alanine + ATP = (R)-pantothenate + AMP + diphosphate + H(+). Its pathway is cofactor biosynthesis; (R)-pantothenate biosynthesis; (R)-pantothenate from (R)-pantoate and beta-alanine: step 1/1. Its function is as follows. Catalyzes the condensation of pantoate with beta-alanine in an ATP-dependent reaction via a pantoyl-adenylate intermediate. The polypeptide is Pantothenate synthetase (Pseudomonas paraeruginosa (strain DSM 24068 / PA7) (Pseudomonas aeruginosa (strain PA7))).